The primary structure comprises 535 residues: Cytochrome c oxidase subunit 1 (535 aa).

Residues 21 to 43 form a helical membrane-spanning segment; sequence VLYFIFALFSAMIGTGLSAIIRL. Ca(2+) is bound by residues glutamate 44 and glycine 49. 6 consecutive transmembrane segments (helical) span residues 63–85, 106–128, 153–175, 188–210, 242–264, and 271–293; these read VITAHAILMIFFFVMPALVGGFG, ISFWLLVPSLILILTSALVEAGA, IFSLHLSGFSSLLGAINFITTFI, PLFAWAVLFTAILLLLSLPVLAA, YWWNHPEVYILIIPGFGIISHAV, and PVFGVQGMIYAMWSIGLLGFCVW. Histidine 67 provides a ligand contact to Fe(II)-heme a. Residue histidine 246 participates in Cu cation binding. Positions 246–250 form a cross-link, 1'-histidyl-3'-tyrosine (His-Tyr); that stretch reads HPEVY. An O2-binding site is contributed by tyrosine 250. Cu cation is bound by residues histidine 295 and histidine 296. A run of 2 helical transmembrane segments spans residues 308-330 and 342-364; these read AYFTSATMVIAVPTSIKIFSWLA and TALFALGFIFLFTIGGLTGVVLA. Positions 373 and 374 each coordinate Mg(2+). The next 3 helical transmembrane spans lie at 379–401, 414–436, and 456–478; these read VAHFHYVLSMGAVFSIFCGWYLW, LSHIHFWLMFIGVNVTFFPMHFL, and NQVASLGSIISIVASIVFIYVVY. Histidine 381 provides a ligand contact to heme a3. Residue histidine 383 coordinates Fe(II)-heme a.

It belongs to the heme-copper respiratory oxidase family. Component of the cytochrome c oxidase (complex IV, CIV), a multisubunit enzyme composed of a catalytic core of 3 subunits and several supernumerary subunits. The complex exists as a monomer or a dimer and forms supercomplexes (SCs) in the inner mitochondrial membrane with ubiquinol-cytochrome c oxidoreductase (cytochrome b-c1 complex, complex III, CIII). Heme is required as a cofactor. It depends on Cu cation as a cofactor.

The protein localises to the mitochondrion inner membrane. The catalysed reaction is 4 Fe(II)-[cytochrome c] + O2 + 8 H(+)(in) = 4 Fe(III)-[cytochrome c] + 2 H2O + 4 H(+)(out). Its pathway is energy metabolism; oxidative phosphorylation. Functionally, component of the cytochrome c oxidase, the last enzyme in the mitochondrial electron transport chain which drives oxidative phosphorylation. The respiratory chain contains 3 multisubunit complexes succinate dehydrogenase (complex II, CII), ubiquinol-cytochrome c oxidoreductase (cytochrome b-c1 complex, complex III, CIII) and cytochrome c oxidase (complex IV, CIV), that cooperate to transfer electrons derived from NADH and succinate to molecular oxygen, creating an electrochemical gradient over the inner membrane that drives transmembrane transport and the ATP synthase. Cytochrome c oxidase is the component of the respiratory chain that catalyzes the reduction of oxygen to water. Electrons originating from reduced cytochrome c in the intermembrane space (IMS) are transferred via the dinuclear copper A center (CU(A)) of subunit 2 and heme A of subunit 1 to the active site in subunit 1, a binuclear center (BNC) formed by heme A3 and copper B (CU(B)). The BNC reduces molecular oxygen to 2 water molecules using 4 electrons from cytochrome c in the IMS and 4 protons from the mitochondrial matrix. In Yarrowia lipolytica (strain CLIB 122 / E 150) (Yeast), this protein is Cytochrome c oxidase subunit 1 (COX1).